We begin with the raw amino-acid sequence, 1084 residues long: Transcription elongation factor SPT5 (1084 aa).

A disordered region spans residues methionine 1 to tryptophan 91. Acidic residues-rich tracts occupy residues alanine 20 to glutamine 32, alanine 41 to aspartate 62, and aspartate 77 to tryptophan 91. Residues aspartate 175–valine 269 are interaction with SUPT4H1. KOW domains lie at leucine 272–lysine 305, leucine 419–methionine 450, phenylalanine 471–phenylalanine 502, and isoleucine 593–lysine 626. Residues leucine 312 to leucine 419 are interaction with RNA polymerase II. Serine 665 is modified (phosphoserine). Residues arginine 667 to aspartate 700 are disordered. Residues proline 674–arginine 694 are compositionally biased toward gly residues. Residues aspartate 702–histidine 735 form the KOW 5 domain. Residues leucine 748–alanine 973 are disordered. Residues glycine 758–histidine 763 form a CTR1-1; approximate repeat. Positions glycine 758 to glutamine 815 are 8 X 7 AA approximate tandem repeats of G-S-[QR]-T-P-X-[YQ], motif CTR1. Residues arginine 759–proline 790 show a composition bias toward polar residues. The CTR1-2; approximate repeat unit spans residues leucine 764–tyrosine 769. The stretch at glycine 770–tyrosine 776 is one CTR1-3 repeat. Phosphothreonine; by CDK9 occurs at positions 773 and 782. The stretch at glycine 779 to tyrosine 785 is one CTR1-4 repeat. Residues glycine 786 to histidine 792 form a CTR1-5 repeat. A CTR1-6 repeat occupies glycine 794–tyrosine 800. The CTR1-7 repeat unit spans residues glycine 801–histidine 807. The CTR1-8 repeat unit spans residues glycine 809 to glutamine 815. Residues aspartate 832 to proline 842 show a composition bias toward acidic residues. The CTR2-1 repeat unit spans residues proline 842 to tyrosine 849. Residues proline 842–tyrosine 948 are 10 X 8 AA approximate tandem repeats of P-[TS]-P-S-P-[QA]-[SG]-Y, motif CTR2. Residues threonine 852–tyrosine 860 form a CTR2-2; approximate repeat. Positions proline 855–proline 864 are enriched in pro residues. The CTR2-3; approximate repeat unit spans residues proline 861–glutamine 867. A compositionally biased stretch (polar residues) spans proline 866–tyrosine 888. The CTR2-4; half-length repeat unit spans residues threonine 879–tyrosine 883. The CTR2-5; approximate repeat unit spans residues proline 894–tyrosine 900. Low complexity predominate over residues proline 894–tyrosine 909. The CTR2-6 repeat unit spans residues proline 902–tyrosine 909. Residues proline 914–tyrosine 919 form a CTR2-7; approximate repeat. A CTR2-8 repeat occupies threonine 922–tyrosine 928. The stretch at proline 930–tyrosine 937 is one CTR2-9 repeat. The CTR2-10 repeat unit spans residues proline 941–tyrosine 948.

This sequence belongs to the SPT5 family. In terms of assembly, interacts with SUPT4H1 to form the DSIF complex. DSIF interacts with RNA polymerase II and with the positive transcription elongation factor b complex (P-TEFb complex), which is composed of CDK9 and cyclin-T. In terms of processing, phosphorylated. Phosphorylation by P-TEFb (CDK9) at Thr residues of the C-terminal repeats alleviates transcriptional pausing and promotes transcription elongation.

It is found in the nucleus. In terms of biological role, component of the DRB sensitivity-inducing factor complex (DSIF complex), which regulates mRNA processing and transcription elongation by RNA polymerase II. DSIF positively regulates mRNA capping by stimulating the mRNA guanylyltransferase activity of RNGTT/CAP1A. DSIF also acts cooperatively with the negative elongation factor complex (NELF complex) to enhance transcriptional pausing at sites proximal to the promoter. Transcriptional pausing may facilitate the assembly of an elongation competent RNA polymerase II complex. DSIF and NELF promote pausing by inhibition of the transcription elongation factor TFIIS/S-II. TFIIS/S-II binds to RNA polymerase II at transcription pause sites and stimulates the weak intrinsic nuclease activity of the enzyme. Cleavage of blocked transcripts by RNA polymerase II promotes the resumption of transcription from the new 3' terminus and may allow repeated attempts at transcription through natural pause sites. Following phosphorylation by CDK9, DSIF can also positively regulate transcriptional elongation. Regulation of transcriptional elongation by this protein is required for the expression of genes which control neuronal development. This chain is Transcription elongation factor SPT5 (supt5h), found in Danio rerio (Zebrafish).